Reading from the N-terminus, the 349-residue chain is Beta-glucanase (349 aa).

Residues 1 to 27 (MNIKKTAVKSALAVAAAAAALTTNVSA) form the signal peptide. A GH16 domain is found at 28-197 (KDFSGAELYT…WVKVYKYTPG (170 aa)). The Nucleophile role is filled by glutamate 79. Glutamate 83 serves as the catalytic Proton donor. The segment at 258-311 (SFNGQVPRDDEPAPQSSSSAPASSSSVPASSSSVPASSSSAFVPPSSSSATNAI) is disordered. The span at 270–307 (APQSSSSAPASSSSVPASSSSVPASSSSAFVPPSSSSA) shows a compositional bias: low complexity. 5 repeat units span residues 271–277 (PQSSSSA), 278–284 (PASSSSV), 285–291 (PASSSSV), 292–298 (PASSSSA), and 301–307 (PPSSSSA). The 5 X 7 AA tandem repeats of P-X-S-S-S-S-X stretch occupies residues 271–307 (PQSSSSAPASSSSVPASSSSVPASSSSAFVPPSSSSA).

This sequence belongs to the glycosyl hydrolase 16 family.

The enzyme catalyses Hydrolysis of (1-&gt;4)-beta-D-glucosidic linkages in beta-D-glucans containing (1-&gt;3)- and (1-&gt;4)-bonds.. In Fibrobacter succinogenes (strain ATCC 19169 / S85), this protein is Beta-glucanase.